Reading from the N-terminus, the 551-residue chain is Pyrroline-5-carboxylate reductase 1 (551 aa).

The tract at residues 279 to 551 (LYTQKQQNKK…RHEVKTEQIN (273 aa)) is disordered. Composition is skewed to low complexity over residues 282 to 298 (QKQQNKKQQQLKQQQHQ), 306 to 342 (QQHQQQVQQQEPHQYQQQQQQSHQQSQYNQGHNYGHQ), 383 to 415 (QQYQQHQQPTQQESQEQTQQPEQTQSTNQSNQR), 424 to 441 (KSPQKQPQKQSQVQQPSS), 448 to 475 (QQQQQQPPQEQQQQQEQPQQPQEQQQQP), 487 to 496 (QQQQPQQQQQ), and 503 to 520 (YNNNRRGGRHYSYNNNYN). Residues 537–551 (YHDEKRHEVKTEQIN) are compositionally biased toward basic and acidic residues.

This sequence belongs to the pyrroline-5-carboxylate reductase family. Homodecamer; composed of 5 homodimers.

The catalysed reaction is L-proline + NADP(+) = (S)-1-pyrroline-5-carboxylate + NADPH + 2 H(+). It catalyses the reaction L-proline + NAD(+) = (S)-1-pyrroline-5-carboxylate + NADH + 2 H(+). It functions in the pathway amino-acid biosynthesis; L-proline biosynthesis; L-proline from L-glutamate 5-semialdehyde: step 1/1. This chain is Pyrroline-5-carboxylate reductase 1 (pycr1), found in Dictyostelium discoideum (Social amoeba).